Consider the following 738-residue polypeptide: 1,4-alpha-glucan branching enzyme GlgB (738 aa).

Residue D399 is the Nucleophile of the active site. The active-site Proton donor is the E452.

This sequence belongs to the glycosyl hydrolase 13 family. GlgB subfamily. As to quaternary structure, monomer.

It catalyses the reaction Transfers a segment of a (1-&gt;4)-alpha-D-glucan chain to a primary hydroxy group in a similar glucan chain.. It participates in glycan biosynthesis; glycogen biosynthesis. Catalyzes the formation of the alpha-1,6-glucosidic linkages in glycogen by scission of a 1,4-alpha-linked oligosaccharide from growing alpha-1,4-glucan chains and the subsequent attachment of the oligosaccharide to the alpha-1,6 position. The protein is 1,4-alpha-glucan branching enzyme GlgB of Chlamydia trachomatis serovar D (strain ATCC VR-885 / DSM 19411 / UW-3/Cx).